A 386-amino-acid chain; its full sequence is Succinate--CoA ligase [ADP-forming] subunit beta (386 aa).

An ATP-grasp domain is found at 9–244 (KEILRKYGVP…HDEEDPLETR (236 aa)). ATP contacts are provided by residues K46, 53 to 55 (GRG), E99, C102, and E107. Mg(2+)-binding residues include N199 and D213. Substrate-binding positions include N264 and 321–323 (GIM).

The protein belongs to the succinate/malate CoA ligase beta subunit family. Heterotetramer of two alpha and two beta subunits. It depends on Mg(2+) as a cofactor.

It carries out the reaction succinate + ATP + CoA = succinyl-CoA + ADP + phosphate. It catalyses the reaction GTP + succinate + CoA = succinyl-CoA + GDP + phosphate. It participates in carbohydrate metabolism; tricarboxylic acid cycle; succinate from succinyl-CoA (ligase route): step 1/1. Its function is as follows. Succinyl-CoA synthetase functions in the citric acid cycle (TCA), coupling the hydrolysis of succinyl-CoA to the synthesis of either ATP or GTP and thus represents the only step of substrate-level phosphorylation in the TCA. The beta subunit provides nucleotide specificity of the enzyme and binds the substrate succinate, while the binding sites for coenzyme A and phosphate are found in the alpha subunit. In Rickettsia peacockii (strain Rustic), this protein is Succinate--CoA ligase [ADP-forming] subunit beta.